We begin with the raw amino-acid sequence, 368 residues long: N-acetylneuraminate epimerase (368 aa).

The N-terminal stretch at 1–19 is a signal peptide; that stretch reads MNKTIMALAIMMASFAANA. Kelch repeat units follow at residues 40–84, 86–137, 139–173, 174–219, 222–265, 287–336, and 338–367; these read TVYI…AFID, NLYV…FVHN, KAYV…KINA, HYFD…VNKG, TWLI…VAGG, ENYQ…PWNN, and LLII…VTVQ. Glu228 serves as the catalytic Proton acceptor.

Belongs to the NanM family. Homodimer.

The protein localises to the periplasm. It catalyses the reaction N-acetyl-alpha-neuraminate = N-acetyl-beta-neuraminate. In terms of biological role, converts alpha-N-acetylneuranimic acid (Neu5Ac) to the beta-anomer, accelerating the equilibrium between the alpha- and beta-anomers. Probably facilitates sialidase-negative bacteria to compete successfully for limited amounts of extracellular Neu5Ac, which is likely taken up in the beta-anomer. In addition, the rapid removal of sialic acid from solution might be advantageous to the bacterium to damp down host responses. In Shigella sonnei (strain Ss046), this protein is N-acetylneuraminate epimerase.